Here is a 217-residue protein sequence, read N- to C-terminus: Pyridoxine/pyridoxamine 5'-phosphate oxidase (217 aa).

Residues 66-71 (RMVLLK), 81-82 (FT), Arg87, Lys88, and Gln110 contribute to the FMN site. Lys71 provides a ligand contact to substrate. Residues Tyr128, Arg132, and Ser136 each coordinate substrate. Residues 145–146 (QS) and Trp190 each bind FMN. 196-198 (RLH) contributes to the substrate binding site. Arg200 provides a ligand contact to FMN.

This sequence belongs to the pyridoxamine 5'-phosphate oxidase family. As to quaternary structure, homodimer. It depends on FMN as a cofactor.

It carries out the reaction pyridoxamine 5'-phosphate + O2 + H2O = pyridoxal 5'-phosphate + H2O2 + NH4(+). The enzyme catalyses pyridoxine 5'-phosphate + O2 = pyridoxal 5'-phosphate + H2O2. It participates in cofactor metabolism; pyridoxal 5'-phosphate salvage; pyridoxal 5'-phosphate from pyridoxamine 5'-phosphate: step 1/1. It functions in the pathway cofactor metabolism; pyridoxal 5'-phosphate salvage; pyridoxal 5'-phosphate from pyridoxine 5'-phosphate: step 1/1. Functionally, catalyzes the oxidation of either pyridoxine 5'-phosphate (PNP) or pyridoxamine 5'-phosphate (PMP) into pyridoxal 5'-phosphate (PLP). The sequence is that of Pyridoxine/pyridoxamine 5'-phosphate oxidase from Psychromonas ingrahamii (strain DSM 17664 / CCUG 51855 / 37).